A 401-amino-acid chain; its full sequence is Probable peptidoglycan glycosyltransferase FtsW (401 aa).

At 1–26 (MAEVLRWLRLDLGQSGGLAWERLDWR) the chain is on the cytoplasmic side. The chain crosses the membrane as a helical span at residues 27–47 (LALTVLALAGLGLVMVGSASV). Residues 48–65 (SIAEGATGDPLHYLYRQA) lie on the Periplasmic side of the membrane. A helical transmembrane segment spans residues 66–86 (VFLAVALMAAVACLHLSLDQF). At 87–88 (YR) the chain is on the cytoplasmic side. A helical transmembrane segment spans residues 89–109 (GGPVLLVLGFFLLLVVLIPGV). Residues 110-118 (GREVNGATR) lie on the Periplasmic side of the membrane. A helical transmembrane segment spans residues 119–139 (WIPLGLINLQVAEVARVCFII). The Cytoplasmic portion of the chain corresponds to 140 to 154 (YLAGYCVRRHAELPN). The helical transmembrane segment at 155–175 (TSSAFAVPLAVFSLAAVLLLA) threads the bilayer. Residues 176–180 (QPDFG) lie on the Periplasmic side of the membrane. A helical membrane pass occupies residues 181–201 (TALVLMATALGLLFLAGASLW). A topological domain (cytoplasmic) is located at residue R202. Residues 203-223 (IGVLGLLLAGAAWLLIVGSPY) form a helical membrane-spanning segment. Over 224 to 278 (RWQRLTTFTDPWADPFNAGFQLTQSLIAIGRGEWFGVGLGASVQKLFYLPEAHTD) the chain is Periplasmic. The helical transmembrane segment at 279 to 299 (FLFAVLAEELGLLGVVVVVAL) threads the bilayer. The Cytoplasmic portion of the chain corresponds to 300 to 322 (FTYLAWRGMQIGLASLRADRPFG). The helical transmembrane segment at 323–343 (AYLAWGLTISIGLQAFINMAV) threads the bilayer. Residues 344-354 (TMGLLPTKGLT) are Periplasmic-facing. The helical transmembrane segment at 355–375 (LPLMSYGGSSLIMTGIALALL) threads the bilayer. Topologically, residues 376–401 (LRVDYEARLAAQQPRPRKRPSGRVRP) are cytoplasmic.

The protein belongs to the SEDS family. FtsW subfamily.

Its subcellular location is the cell inner membrane. The catalysed reaction is [GlcNAc-(1-&gt;4)-Mur2Ac(oyl-L-Ala-gamma-D-Glu-L-Lys-D-Ala-D-Ala)](n)-di-trans,octa-cis-undecaprenyl diphosphate + beta-D-GlcNAc-(1-&gt;4)-Mur2Ac(oyl-L-Ala-gamma-D-Glu-L-Lys-D-Ala-D-Ala)-di-trans,octa-cis-undecaprenyl diphosphate = [GlcNAc-(1-&gt;4)-Mur2Ac(oyl-L-Ala-gamma-D-Glu-L-Lys-D-Ala-D-Ala)](n+1)-di-trans,octa-cis-undecaprenyl diphosphate + di-trans,octa-cis-undecaprenyl diphosphate + H(+). It participates in cell wall biogenesis; peptidoglycan biosynthesis. Functionally, peptidoglycan polymerase that is essential for cell division. This is Probable peptidoglycan glycosyltransferase FtsW from Alkalilimnicola ehrlichii (strain ATCC BAA-1101 / DSM 17681 / MLHE-1).